The following is a 145-amino-acid chain: D-aminoacyl-tRNA deacylase (145 aa).

Positions 137–138 (GP) match the Gly-cisPro motif, important for rejection of L-amino acids motif.

Belongs to the DTD family. In terms of assembly, homodimer.

Its subcellular location is the cytoplasm. It catalyses the reaction glycyl-tRNA(Ala) + H2O = tRNA(Ala) + glycine + H(+). The enzyme catalyses a D-aminoacyl-tRNA + H2O = a tRNA + a D-alpha-amino acid + H(+). Functionally, an aminoacyl-tRNA editing enzyme that deacylates mischarged D-aminoacyl-tRNAs. Also deacylates mischarged glycyl-tRNA(Ala), protecting cells against glycine mischarging by AlaRS. Acts via tRNA-based rather than protein-based catalysis; rejects L-amino acids rather than detecting D-amino acids in the active site. By recycling D-aminoacyl-tRNA to D-amino acids and free tRNA molecules, this enzyme counteracts the toxicity associated with the formation of D-aminoacyl-tRNA entities in vivo and helps enforce protein L-homochirality. In Salmonella enteritidis PT4 (strain P125109), this protein is D-aminoacyl-tRNA deacylase.